Here is a 199-residue protein sequence, read N- to C-terminus: NAD(P)H dehydrogenase (quinone) (199 aa).

Residues 4 to 190 (VLVLYYSMYG…AIARFQGKHV (187 aa)) enclose the Flavodoxin-like domain. Residues 10–15 (SMYGHI) and 79–81 (TRF) each bind FMN. Tyr-12 provides a ligand contact to NAD(+). Trp-99 contacts substrate. Residues 114–119 (STGTGG) and His-134 contribute to the FMN site.

The protein belongs to the WrbA family. FMN is required as a cofactor.

The catalysed reaction is a quinone + NADH + H(+) = a quinol + NAD(+). It carries out the reaction a quinone + NADPH + H(+) = a quinol + NADP(+). In Marinobacter nauticus (strain ATCC 700491 / DSM 11845 / VT8) (Marinobacter aquaeolei), this protein is NAD(P)H dehydrogenase (quinone).